A 75-amino-acid polypeptide reads, in one-letter code: Alpha-amylase inhibitor Paim-2 (75 aa).

Disulfide bonds link Cys-10–Cys-26 and Cys-44–Cys-72.

Inhibits mammalian alpha-amylases specifically but has no action on plant and microbial alpha-amylases. This chain is Alpha-amylase inhibitor Paim-2, found in Streptomyces olivaceoviridis (Streptomyces corchorusii).